A 171-amino-acid polypeptide reads, in one-letter code: Peptide deformylase (171 aa).

Residues Cys87 and His129 each coordinate Fe cation. Glu130 is an active-site residue. Residue His133 participates in Fe cation binding.

This sequence belongs to the polypeptide deformylase family. Requires Fe(2+) as cofactor.

The enzyme catalyses N-terminal N-formyl-L-methionyl-[peptide] + H2O = N-terminal L-methionyl-[peptide] + formate. Functionally, removes the formyl group from the N-terminal Met of newly synthesized proteins. Requires at least a dipeptide for an efficient rate of reaction. N-terminal L-methionine is a prerequisite for activity but the enzyme has broad specificity at other positions. The sequence is that of Peptide deformylase from Pseudothermotoga lettingae (strain ATCC BAA-301 / DSM 14385 / NBRC 107922 / TMO) (Thermotoga lettingae).